A 103-amino-acid chain; its full sequence is Small ribosomal subunit protein uS17 (103 aa).

The tract at residues serine 78 to glutamate 103 is disordered.

It belongs to the universal ribosomal protein uS17 family. As to quaternary structure, part of the 30S ribosomal subunit.

Functionally, one of the primary rRNA binding proteins, it binds specifically to the 5'-end of 16S ribosomal RNA. In Parasynechococcus marenigrum (strain WH8102), this protein is Small ribosomal subunit protein uS17.